The following is a 1304-amino-acid chain: Splicing factor 3B subunit 1 (1304 aa).

Disordered stretches follow at residues 100–119 (QYDP…EDEY) and 124–148 (RTMI…PKMN). Residues 104-119 (FAEHRPPKIADREDEY) show a composition bias toward basic and acidic residues. Residue Thr125 is modified to Phosphothreonine. The residue at position 129 (Ser129) is a Phosphoserine. Lys141 carries the N6-acetyllysine modification. Thr142 carries the phosphothreonine modification. Arg157 is modified (citrulline). The interval 173 to 360 (AEKAKAGELK…PVLTPGKTPI (188 aa)) is disordered. The interval 190 to 342 (SQPPSKRKRR…KRKSRWDETP (153 aa)) is U2AF homology region; mediates interaction with RBM39. Residue Ser194 is modified to Phosphoserine. Phosphothreonine is present on residues Thr203, Thr207, and Thr211. N6-acetyllysine; alternate is present on Lys214. Lys214 is covalently cross-linked (Glycyl lysine isopeptide (Lys-Gly) (interchain with G-Cter in SUMO2); alternate). Residues Thr223 and Thr227 each carry the phosphothreonine modification. The segment at 223 to 491 (TPGHTPSLRW…VDESTLSPEE (269 aa)) is interaction with PPP1R8. Ser229 is subject to Phosphoserine. A compositionally biased stretch (basic and acidic residues) spans 231-241 (RWDETPGRAKG). Phosphothreonine is present on residues Thr235, Thr244, Thr248, Thr257, Thr261, Thr267, Thr273, and Thr278. Ser287 is modified (phosphoserine). A compositionally biased stretch (basic and acidic residues) spans 291-304 (NRWDETPKTERDTP). Thr296, Thr299, Thr303, and Thr313 each carry phosphothreonine. Ser322 is modified (phosphoserine). Phosphothreonine is present on residues Thr326 and Thr328. Ser332 bears the Phosphoserine mark. Position 341 is a phosphothreonine (Thr341). The segment covering 342–352 (PASQMGGSTPV) has biased composition (polar residues). A phosphoserine mark is found at Ser344 and Ser349. A phosphothreonine mark is found at Thr350 and Thr354. Ser400 is subject to Phosphoserine. A Glycyl lysine isopeptide (Lys-Gly) (interchain with G-Cter in SUMO2); alternate cross-link involves residue Lys413. Residue Lys413 forms a Glycyl lysine isopeptide (Lys-Gly) (interchain with G-Cter in SUMO1); alternate linkage. Residue Thr426 is modified to Phosphothreonine. Lys430 is covalently cross-linked (Glycyl lysine isopeptide (Lys-Gly) (interchain with G-Cter in SUMO2)). Thr434 is subject to Phosphothreonine; by DYRK1A. Position 436 is a phosphothreonine (Thr436). Ser488 carries the post-translational modification Phosphoserine. 11 HEAT repeats span residues 529-568 (GPLF…DLVR), 569-603 (PYVH…LAKA), 604-641 (AGLA…ALGI), 643-677 (SLLP…LMGC), 680-718 (LPHL…AATP), 763-801 (NYYT…TDGV), 843-881 (KVGA…NLGA), 1010-1048 (TPPI…RGAE), 1052-1090 (AREW…AIGP), 1122-1160 (TCSP…YIGE), and 1163-1201 (KDYI…GVYG). Positions 529–568 (GPLFNQILPLLMSPTLEDQERHLLVKVIDRILYKLDDLVR) are interaction with SF3B14. The segment at 547 to 550 (QERH) is interaction with PHF5A. N6-acetyllysine occurs at positions 554 and 562. The tract at residues 1156–1157 (EY) is interaction with PHF5A. An interaction with SF3B3 and SF3B5 region spans residues 1248–1304 (QYCLQGLFHPARKVRDVYWKIYNSIYIGSQDALIAHYPRIYNDDKNTYIRYELDYIL).

It belongs to the SF3B1 family. As to quaternary structure, component of the 17S U2 SnRNP complex, a ribonucleoprotein complex that contains small nuclear RNA (snRNA) U2 and a number of specific proteins. Part of the SF3B subcomplex of the 17S U2 SnRNP complex. SF3B associates with the splicing subcomplex SF3A and a 12S RNA unit to form the U2 small nuclear ribonucleoproteins complex (U2 snRNP). Within the SF3B complex, interacts directly (via HEAT domain) with SF3B3, SF3B5, SF3B6 and (via HEAT domain) with PHF5A. The SF3B subcomplex interacts with U2AF2. Identified in the spliceosome C complex. Component of the minor (U12-type spliceosome) spliceosome. Within the minor spliceosome complex, interacts with SCNM1 and CRIPT. Component of the B-WICH complex, at least composed of SMARCA5/SNF2H, BAZ1B/WSTF, SF3B1, DEK, MYO1C, ERCC6, MYBBP1A and DDX21. Phosphorylated form interacts with PPP1R8. Interacts with PQBP1. Interacts with RBM17. Interacts with RBM39. Interacts with SETX. Interacts with RBM15. Interacts with USH1G. Interacts with SDE2. Interacts with U2AF1. Interacts with CACTIN. Interacts with ZRSR1. Interacts with CYREN. Post-translationally, phosphorylated. Phosphorylation occurs concomitantly with the splicing catalytic steps. Phosphorylation on Thr-244, Thr-248 and Thr-313 by cyclin-dependent kinases promotes interaction with PPP1R8 during mitosis. In terms of processing, citrullinated by PADI4.

It is found in the nucleus. The protein resides in the nucleus speckle. Functionally, component of the 17S U2 SnRNP complex of the spliceosome, a large ribonucleoprotein complex that removes introns from transcribed pre-mRNAs. The 17S U2 SnRNP complex (1) directly participates in early spliceosome assembly and (2) mediates recognition of the intron branch site during pre-mRNA splicing by promoting the selection of the pre-mRNA branch-site adenosine, the nucleophile for the first step of splicing. Within the 17S U2 SnRNP complex, SF3B1 is part of the SF3B subcomplex, which is required for 'A' complex assembly formed by the stable binding of U2 snRNP to the branchpoint sequence in pre-mRNA. Sequence independent binding of SF3A and SF3B subcomplexes upstream of the branch site is essential, it may anchor U2 snRNP to the pre-mRNA. May also be involved in the assembly of the 'E' complex. Also acts as a component of the minor spliceosome, which is involved in the splicing of U12-type introns in pre-mRNAs. Together with other U2 snRNP complex components may also play a role in the selective processing of microRNAs (miRNAs) from the long primary miRNA transcript, pri-miR-17-92. This is Splicing factor 3B subunit 1 from Homo sapiens (Human).